A 220-amino-acid polypeptide reads, in one-letter code: V-set and transmembrane domain-containing protein 2-like protein (220 aa).

An N-terminal signal peptide occupies residues 1 to 24 (MGAPLAAALGALHYLALFLQLGGA). One can recognise an Ig-like domain in the interval 41 to 158 (ALFTETPHDM…DGGRGVPRVL (118 aa)). Residues Cys62 and Cys142 are joined by a disulfide bond. Residues 165–180 (PAPPRAPRPRGQPPGE) show a composition bias toward pro residues. The tract at residues 165-220 (PAPPRAPRPRGQPPGEEPGRGPTLLFLIILPGTGSGTPREAEPHQPHAGGCPARQS) is disordered.

The chain is V-set and transmembrane domain-containing protein 2-like protein (Vstm2l) from Mus musculus (Mouse).